The primary structure comprises 393 residues: 26S proteasome regulatory subunit RPN9 (393 aa).

The region spanning 187–355 (SFYYTSLLYL…ELVTISWVQP (169 aa)) is the PCI domain.

It belongs to the proteasome subunit S11 family.

Its function is as follows. Acts as a regulatory subunit of the 26S proteasome which is involved in the ATP-dependent degradation of ubiquitinated proteins. The chain is 26S proteasome regulatory subunit RPN9 (RPN9) from Saccharomyces cerevisiae (strain ATCC 204508 / S288c) (Baker's yeast).